Here is a 602-residue protein sequence, read N- to C-terminus: Elongation factor 4 (602 aa).

Residues 7 to 189 (SKIRNFCIIA…AIVRRVPAPQ (183 aa)) form the tr-type G domain. GTP is bound by residues 19 to 24 (DHGKST) and 136 to 139 (NKVD).

It belongs to the TRAFAC class translation factor GTPase superfamily. Classic translation factor GTPase family. LepA subfamily.

It is found in the cell inner membrane. It catalyses the reaction GTP + H2O = GDP + phosphate + H(+). Functionally, required for accurate and efficient protein synthesis under certain stress conditions. May act as a fidelity factor of the translation reaction, by catalyzing a one-codon backward translocation of tRNAs on improperly translocated ribosomes. Back-translocation proceeds from a post-translocation (POST) complex to a pre-translocation (PRE) complex, thus giving elongation factor G a second chance to translocate the tRNAs correctly. Binds to ribosomes in a GTP-dependent manner. This chain is Elongation factor 4, found in Prochlorococcus marinus (strain MIT 9312).